Consider the following 397-residue polypeptide: Dual-specificity RNA methyltransferase RlmN (397 aa).

Catalysis depends on E130, which acts as the Proton acceptor. Positions 138-377 constitute a Radical SAM core domain; sequence VEDRGAVCIS…ASPIRTPRGR (240 aa). A disulfide bridge links C145 with C383. C152, C156, and C159 together coordinate [4Fe-4S] cluster. S-adenosyl-L-methionine is bound by residues 209–210, S241, 263–265, and N340; these read GE and SLH. The S-methylcysteine intermediate role is filled by C383.

It belongs to the radical SAM superfamily. RlmN family. [4Fe-4S] cluster is required as a cofactor.

It is found in the cytoplasm. The catalysed reaction is adenosine(2503) in 23S rRNA + 2 reduced [2Fe-2S]-[ferredoxin] + 2 S-adenosyl-L-methionine = 2-methyladenosine(2503) in 23S rRNA + 5'-deoxyadenosine + L-methionine + 2 oxidized [2Fe-2S]-[ferredoxin] + S-adenosyl-L-homocysteine. It catalyses the reaction adenosine(37) in tRNA + 2 reduced [2Fe-2S]-[ferredoxin] + 2 S-adenosyl-L-methionine = 2-methyladenosine(37) in tRNA + 5'-deoxyadenosine + L-methionine + 2 oxidized [2Fe-2S]-[ferredoxin] + S-adenosyl-L-homocysteine. Functionally, specifically methylates position 2 of adenine 2503 in 23S rRNA and position 2 of adenine 37 in tRNAs. m2A2503 modification seems to play a crucial role in the proofreading step occurring at the peptidyl transferase center and thus would serve to optimize ribosomal fidelity. This is Dual-specificity RNA methyltransferase RlmN from Granulibacter bethesdensis (strain ATCC BAA-1260 / CGDNIH1).